A 261-amino-acid polypeptide reads, in one-letter code: Ribosomal RNA small subunit methyltransferase J (261 aa).

S-adenosyl-L-methionine contacts are provided by residues 109-110 (RD), 125-126 (ER), and Asp-179.

The protein belongs to the methyltransferase superfamily. RsmJ family.

The protein localises to the cytoplasm. The catalysed reaction is guanosine(1516) in 16S rRNA + S-adenosyl-L-methionine = N(2)-methylguanosine(1516) in 16S rRNA + S-adenosyl-L-homocysteine + H(+). Functionally, specifically methylates the guanosine in position 1516 of 16S rRNA. This chain is Ribosomal RNA small subunit methyltransferase J, found in Pseudomonas paraeruginosa (strain DSM 24068 / PA7) (Pseudomonas aeruginosa (strain PA7)).